The sequence spans 183 residues: Large ribosomal subunit protein uL13m (183 aa).

This sequence belongs to the universal ribosomal protein uL13 family. Component of the mitochondrial large ribosomal subunit (mt-LSU). Mature N.crassa 74S mitochondrial ribosomes consist of a small (37S) and a large (54S) subunit. The 37S small subunit contains a 16S ribosomal RNA (16S mt-rRNA) and 32 different proteins. The 54S large subunit contains a 23S rRNA (23S mt-rRNA) and 42 different proteins.

It is found in the mitochondrion. Component of the mitochondrial ribosome (mitoribosome), a dedicated translation machinery responsible for the synthesis of mitochondrial genome-encoded proteins, including at least some of the essential transmembrane subunits of the mitochondrial respiratory chain. The mitoribosomes are attached to the mitochondrial inner membrane and translation products are cotranslationally integrated into the membrane. The polypeptide is Large ribosomal subunit protein uL13m (mrpl23) (Neurospora crassa (strain ATCC 24698 / 74-OR23-1A / CBS 708.71 / DSM 1257 / FGSC 987)).